The sequence spans 256 residues: MLSRVVLSAAATAAPCLKNAAALGPGVLQATRAFHTGQPRLAPLPPLPEYGGKVRLGLIPEEFFQFLYPKTGVTGPYVLGTGLSLYFLSKEIYVITPETFSTISVVGLIVYVIKKYGASFGEFIDKLNEEKIAQLEEVKQSSMKQIQDAIDMEKAQQALVQKRHYLFDVQRNNIALALEVTYRERLHKAYKEVKNRLDYHISVQNMMRRKEEEHMIDWVEKHVVKSISVQQEKETIAKCIEDLKLLAKKAQAQPIM.

A mitochondrion-targeting transit peptide spans 1–42 (MLSRVVLSAAATAAPCLKNAAALGPGVLQATRAFHTGQPRLA). Position 131 is an N6-succinyllysine (K131). 7 positions are modified to N6-acetyllysine: K139, K154, K162, K221, K225, K233, and K244.

This sequence belongs to the eukaryotic ATPase B chain family. As to quaternary structure, component of the ATP synthase complex composed at least of ATP5F1A/subunit alpha, ATP5F1B/subunit beta, ATP5MC1/subunit c (homooctomer), MT-ATP6/subunit a, MT-ATP8/subunit 8, ATP5ME/subunit e, ATP5MF/subunit f, ATP5MG/subunit g, ATP5MK/subunit k, ATP5MJ/subunit j, ATP5F1C/subunit gamma, ATP5F1D/subunit delta, ATP5F1E/subunit epsilon, ATP5PF/subunit F6, ATP5PB/subunit b, ATP5PD/subunit d, ATP5PO/subunit OSCP. ATP synthase complex consists of a soluble F(1) head domain (subunits alpha(3) and beta(3)) - the catalytic core - and a membrane F(0) domain - the membrane proton channel (subunits c, a, 8, e, f, g, k and j). These two domains are linked by a central stalk (subunits gamma, delta, and epsilon) rotating inside the F1 region and a stationary peripheral stalk (subunits F6, b, d, and OSCP).

The protein localises to the mitochondrion. Its subcellular location is the mitochondrion inner membrane. Subunit b, of the mitochondrial membrane ATP synthase complex (F(1)F(0) ATP synthase or Complex V) that produces ATP from ADP in the presence of a proton gradient across the membrane which is generated by electron transport complexes of the respiratory chain. ATP synthase complex consist of a soluble F(1) head domain - the catalytic core - and a membrane F(1) domain - the membrane proton channel. These two domains are linked by a central stalk rotating inside the F(1) region and a stationary peripheral stalk. During catalysis, ATP synthesis in the catalytic domain of F(1) is coupled via a rotary mechanism of the central stalk subunits to proton translocation. In vivo, can only synthesize ATP although its ATP hydrolase activity can be activated artificially in vitro. Part of the complex F(0) domain. Part of the complex F(0) domain and the peripheric stalk, which acts as a stator to hold the catalytic alpha(3)beta(3) subcomplex and subunit a/ATP6 static relative to the rotary elements. This is ATP synthase peripheral stalk subunit b, mitochondrial from Mus musculus (Mouse).